Consider the following 380-residue polypeptide: Crotonobetainyl-CoA reductase (380 aa).

It belongs to the acyl-CoA dehydrogenase family. In terms of assembly, homotetramer. Requires FAD as cofactor.

The protein resides in the cytoplasm. The catalysed reaction is 4-(trimethylamino)butanoyl-CoA + oxidized [electron-transfer flavoprotein] + H(+) = crotonobetainyl-CoA + reduced [electron-transfer flavoprotein]. Its pathway is amine and polyamine metabolism; carnitine metabolism. Its function is as follows. Catalyzes the reduction of crotonobetainyl-CoA to gamma-butyrobetainyl-CoA. The protein is Crotonobetainyl-CoA reductase of Salmonella typhi.